Here is a 312-residue protein sequence, read N- to C-terminus: Methionyl-tRNA formyltransferase (312 aa).

112–115 (SLLP) serves as a coordination point for (6S)-5,6,7,8-tetrahydrofolate.

It belongs to the Fmt family.

It catalyses the reaction L-methionyl-tRNA(fMet) + (6R)-10-formyltetrahydrofolate = N-formyl-L-methionyl-tRNA(fMet) + (6S)-5,6,7,8-tetrahydrofolate + H(+). Attaches a formyl group to the free amino group of methionyl-tRNA(fMet). The formyl group appears to play a dual role in the initiator identity of N-formylmethionyl-tRNA by promoting its recognition by IF2 and preventing the misappropriation of this tRNA by the elongation apparatus. In Syntrophus aciditrophicus (strain SB), this protein is Methionyl-tRNA formyltransferase.